The chain runs to 148 residues: F420H(2)-dependent quinone reductase MT1609 (148 aa).

Residues 46 to 48 (AKT), 52 to 57 (RKTPLM), 68 to 71 (VASL), 79 to 83 (VWYHN), and tyrosine 125 contribute to the coenzyme F420-(gamma-Glu)n site.

This sequence belongs to the F420H(2)-dependent quinone reductase family.

It localises to the cell membrane. It carries out the reaction oxidized coenzyme F420-(gamma-L-Glu)(n) + a quinol + H(+) = reduced coenzyme F420-(gamma-L-Glu)(n) + a quinone. Involved in a F420-dependent anti-oxidant mechanism that protects M.tuberculosis against oxidative stress and bactericidal agents. Catalyzes the F420H(2)-dependent two-electron reduction of quinones to dihydroquinones, thereby preventing the formation of cytotoxic semiquinones obtained by the one-electron reduction pathway. In vitro, catalyzes the reduction of menadione to menadiol; since menaquinone is the sole quinone electron carrier in the respiratory chain in M.tuberculosis, the physiological electron acceptor for Fqr-mediated F420H(2) oxidation is therefore likely to be the endogenous menaquinone found in the membrane fraction of M.tuberculosis. The protein is F420H(2)-dependent quinone reductase MT1609 of Mycobacterium tuberculosis (strain CDC 1551 / Oshkosh).